The primary structure comprises 898 residues: Alanine--tRNA ligase (898 aa).

Zn(2+) is bound by residues His-564, His-568, Cys-682, and His-686.

Belongs to the class-II aminoacyl-tRNA synthetase family. The cofactor is Zn(2+).

Its subcellular location is the cytoplasm. The catalysed reaction is tRNA(Ala) + L-alanine + ATP = L-alanyl-tRNA(Ala) + AMP + diphosphate. Catalyzes the attachment of alanine to tRNA(Ala) in a two-step reaction: alanine is first activated by ATP to form Ala-AMP and then transferred to the acceptor end of tRNA(Ala). Also edits incorrectly charged Ser-tRNA(Ala) and Gly-tRNA(Ala) via its editing domain. This is Alanine--tRNA ligase from Beijerinckia indica subsp. indica (strain ATCC 9039 / DSM 1715 / NCIMB 8712).